We begin with the raw amino-acid sequence, 333 residues long: Holliday junction branch migration complex subunit RuvB (333 aa).

The segment at 1–173 is large ATPase domain (RuvB-L); it reads MTAPENLDAA…FGIIEHLEYY (173 aa). Residues Leu11, Arg12, Gly53, Lys56, Thr57, Thr58, 120 to 122, Arg163, Tyr173, and Arg210 contribute to the ATP site; that span reads EDF. Thr57 contributes to the Mg(2+) binding site. The small ATPAse domain (RuvB-S) stretch occupies residues 174–244; sequence TAEEIATNLL…RAQSALDKLG (71 aa). Positions 247-333 are head domain (RuvB-H); it reads SAGLDDRDKK…IDDGNGIFLN (87 aa). The DNA site is built by Arg302 and Arg307.

It belongs to the RuvB family. As to quaternary structure, homohexamer. Forms an RuvA(8)-RuvB(12)-Holliday junction (HJ) complex. HJ DNA is sandwiched between 2 RuvA tetramers; dsDNA enters through RuvA and exits via RuvB. An RuvB hexamer assembles on each DNA strand where it exits the tetramer. Each RuvB hexamer is contacted by two RuvA subunits (via domain III) on 2 adjacent RuvB subunits; this complex drives branch migration. In the full resolvosome a probable DNA-RuvA(4)-RuvB(12)-RuvC(2) complex forms which resolves the HJ.

It localises to the cytoplasm. It catalyses the reaction ATP + H2O = ADP + phosphate + H(+). Its function is as follows. The RuvA-RuvB-RuvC complex processes Holliday junction (HJ) DNA during genetic recombination and DNA repair, while the RuvA-RuvB complex plays an important role in the rescue of blocked DNA replication forks via replication fork reversal (RFR). RuvA specifically binds to HJ cruciform DNA, conferring on it an open structure. The RuvB hexamer acts as an ATP-dependent pump, pulling dsDNA into and through the RuvAB complex. RuvB forms 2 homohexamers on either side of HJ DNA bound by 1 or 2 RuvA tetramers; 4 subunits per hexamer contact DNA at a time. Coordinated motions by a converter formed by DNA-disengaged RuvB subunits stimulates ATP hydrolysis and nucleotide exchange. Immobilization of the converter enables RuvB to convert the ATP-contained energy into a lever motion, pulling 2 nucleotides of DNA out of the RuvA tetramer per ATP hydrolyzed, thus driving DNA branch migration. The RuvB motors rotate together with the DNA substrate, which together with the progressing nucleotide cycle form the mechanistic basis for DNA recombination by continuous HJ branch migration. Branch migration allows RuvC to scan DNA until it finds its consensus sequence, where it cleaves and resolves cruciform DNA. This chain is Holliday junction branch migration complex subunit RuvB, found in Deinococcus radiodurans (strain ATCC 13939 / DSM 20539 / JCM 16871 / CCUG 27074 / LMG 4051 / NBRC 15346 / NCIMB 9279 / VKM B-1422 / R1).